Reading from the N-terminus, the 468-residue chain is UDP-N-acetylmuramate--L-alanine ligase (468 aa).

An ATP-binding site is contributed by 118–124; the sequence is GTHGKTT.

Belongs to the MurCDEF family.

The protein localises to the cytoplasm. The catalysed reaction is UDP-N-acetyl-alpha-D-muramate + L-alanine + ATP = UDP-N-acetyl-alpha-D-muramoyl-L-alanine + ADP + phosphate + H(+). It participates in cell wall biogenesis; peptidoglycan biosynthesis. Cell wall formation. This Roseobacter denitrificans (strain ATCC 33942 / OCh 114) (Erythrobacter sp. (strain OCh 114)) protein is UDP-N-acetylmuramate--L-alanine ligase.